Reading from the N-terminus, the 593-residue chain is Transcriptional repressor p66-beta (593 aa).

S17 carries the phosphoserine modification. Glycyl lysine isopeptide (Lys-Gly) (interchain with G-Cter in SUMO2) cross-links involve residues K33, K66, and K97. Residues 62–123 (ELPTKQDGSG…PERGRLTPSP (62 aa)) form a disordered region. Composition is skewed to basic and acidic residues over residues 74–100 (GYEEKLNGNLRPHGDNRTAGRPGKENI) and 108–118 (SARRSEPERGR). T120 carries the phosphothreonine modification. Phosphoserine is present on residues S122, S129, S134, and S135. Positions 140-194 (SRMEERLKAANLEMFKGKGIEERQQLIKQLRDELRLEEARLVLLKKLRQSQLQKE) form a coiled coil. K147 participates in a covalent cross-link: Glycyl lysine isopeptide (Lys-Gly) (interchain with G-Cter in SUMO2). Positions 165 to 195 (LIKQLRDELRLEEARLVLLKKLRQSQLQKEN) are CR1; interaction with MBD2 and MBD3. K199 participates in a covalent cross-link: Glycyl lysine isopeptide (Lys-Gly) (interchain with G-Cter in SUMO2). S208 bears the Phosphoserine mark. The disordered stretch occupies residues 213-235 (SPAHVGQQGLSKLPSRPGAQGVE). K281 participates in a covalent cross-link: Glycyl lysine isopeptide (Lys-Gly) (interchain with G-Cter in SUMO2). Phosphoserine occurs at positions 333, 338, and 340. Residues 340-480 (SAMTDAANSQ…QEQEIEQRLQ (141 aa)) form a CR2; histone tail-binding region. Glycyl lysine isopeptide (Lys-Gly) (interchain with G-Cter in SUMO2) cross-links involve residues K353, K454, and K467. Residues 414-467 (RVEPFVCAQCRTDFTPHWKQEKNGKILCEQCMTSNQKKALKAEHTNRLKNAFVK) form a GATA-type zinc finger. The stretch at 449–482 (QKKALKAEHTNRLKNAFVKALQQEQEIEQRLQQQ) forms a coiled coil. S486 carries the phosphoserine modification. K498 participates in a covalent cross-link: Glycyl lysine isopeptide (Lys-Gly) (interchain with G-Cter in SUMO2).

As to quaternary structure, homooligomer. Component of the nucleosome remodeling and deacetylase (NuRD) repressor complex, composed of core proteins MTA1, MTA2, MTA3, RBBP4, RBBP7, HDAC1, HDAC2, MBD2, MBD3, and peripherally associated proteins CDK2AP1, CDK2AP2, GATAD2A, GATAD2B, CHD3, CHD4 and CHD5. The exact stoichiometry of the NuRD complex is unknown, and some subunits such as MBD2 and MBD3, GATAD2A and GATAD2B, and CHD3, CHD4 and CHD5 define mutually exclusive NuRD complexes. Interacts with MBD2; this is required for the enhancement of MBD2-mediated repression and for targeting to the chromatin. Interacts with MBD3. Component of the MeCP1 histone deacetylase complex. Interacts with histone tails, including that of histones H2A, H2B, H3 and H4. Interacts with ERCC6. In terms of tissue distribution, widely expressed.

Its subcellular location is the nucleus speckle. It localises to the nucleus. The protein localises to the chromosome. Functionally, transcriptional repressor. Acts as a component of the histone deacetylase NuRD complex which participates in the remodeling of chromatin. Enhances MBD2-mediated repression. Efficient repression requires the presence of GATAD2A. Targets MBD3 to discrete loci in the nucleus. May play a role in synapse development. This chain is Transcriptional repressor p66-beta (GATAD2B), found in Homo sapiens (Human).